The chain runs to 773 residues: Transducin-like enhancer protein 4 (773 aa).

3 disordered regions span residues 1-22, 140-162, and 182-360; these read MIRD…QPAQ, HGHG…AIPP, and LPIK…ASSL. The q domain stretch occupies residues 1 to 136; the sequence is MIRDLSKMYP…AIIGQQLQAQ (136 aa). Positions 137–204 are GP domain; it reads HLSHGHGLPV…HQRDRDSIKS (68 aa). Positions 183–202 are enriched in basic and acidic residues; sequence PIKDEKKHHDNDHQRDRDSI. Residues 203–212 show a composition bias toward low complexity; the sequence is KSSSVSPSAS. The tract at residues 205–274 is ccN domain; it reads SSVSPSASFR…SPRGSPAHSP (70 aa). Phosphoserine occurs at positions 208, 212, and 222. Over residues 215-252 the composition is skewed to basic and acidic residues; that stretch reads GAEKHRNSADYSSESKKQKTEEKEIAARYDSDGEKSDD. Position 237 is an N6-acetyllysine (K237). S245, S250, S269, and S273 each carry phosphoserine. A compositionally biased stretch (basic and acidic residues) spans 273–289; it reads SPRENGLDKTRLLKKDA. The segment at 275-452 is SP domain; sequence RENGLDKTRL…PGGKPAYSFH (178 aa). An N6-acetyllysine modification is found at K281. Over residues 290–305 the composition is skewed to low complexity; that stretch reads PISPASIASSSSTPSS. Position 292 is a phosphoserine (S292). Over residues 317-328 the composition is skewed to polar residues; that stretch reads TTPVSKSNTPTP. At T318 the chain carries Phosphothreonine. Residues S321 and S323 each carry the phosphoserine modification. Phosphothreonine occurs at positions 325, 327, 334, and 340. The residue at position 419 (S419) is a Phosphoserine. WD repeat units follow at residues 485–523, 531–570, 575–614, 617–656, 658–697, 699–738, and 740–773; these read NHGE…NKSP, NRDN…PRIK, SSAP…LVRQ, GHTD…QLQQ, DFTS…KYQL, LHES…SIFQ, and KESS…EVIY.

The protein belongs to the WD repeat Groucho/TLE family. As to quaternary structure, homooligomer and heterooligomer with other family members. Interacts with PAX5. Interacts with LEF1, TCF7, TCF7L1 and TCF7L2. Interacts with ZNF703; TLE4 may mediate ZNF703 transcriptional repression. Interacts with SIX3 and SIX6. Interacts with PAX2. Interacts with TLE1. Phosphorylated. PAX5 binding increases phosphorylation. In terms of processing, ubiquitinated by XIAP/BIRC4. In terms of tissue distribution, in all tissues examined, mostly in brain, and muscle.

The protein localises to the nucleus. Transcriptional corepressor that binds to a number of transcription factors. Inhibits the transcriptional activation mediated by PAX5, and by CTNNB1 and TCF family members in Wnt signaling. The effects of full-length TLE family members may be modulated by association with dominant-negative AES. Essential for the transcriptional repressor activity of SIX3 during retina and lens development and for SIX3 transcriptional auto-repression. Involved in transcriptional repression of GNRHR and enhances MSX1-mediated transcriptional repression of CGA/alpha-GSU. The polypeptide is Transducin-like enhancer protein 4 (TLE4) (Homo sapiens (Human)).